We begin with the raw amino-acid sequence, 756 residues long: U3 small nucleolar RNA-associated protein 25 homolog (756 aa).

The tract at residues 1-159 (MGKRGSRSQS…SQTSPEEFTD (159 aa)) is disordered. 2 promotes p53/TP53 degradation regions span residues 1–185 (MGKR…SLKA) and 573–635 (VQLP…KKEE). Serine 10 is modified (phosphoserine). Positions 25–43 (RDFGEEHPFYDRVSRKEAK) are enriched in basic and acidic residues. A phosphoserine mark is found at serine 50, serine 52, serine 58, serine 60, serine 62, and serine 64. 2 stretches are compositionally biased toward acidic residues: residues 54 to 64 (DSSDSESDSES) and 84 to 121 (EEEEEDEEEEEEEDSIVDDAEMNDEDGGSDVSVEEEMA). The represses p53/TP53 degradation stretch occupies residues 636–697 (LNFTHICEYT…YELPTYPHFY (62 aa)).

This sequence belongs to the UTP25 family. Interacts with CAPN3; the interaction is required for CAPN3 translocation to the nucleolus. In terms of processing, phosphorylated. Phosphorylation is required to promote p53/TP53 degradation in the nucleolus which promotes cell cycle progression and liver development. Expressed in colon.

The protein localises to the nucleus. Its subcellular location is the nucleolus. In terms of biological role, component of the ribosomal small subunit processome for the biogenesis of ribosomes, functions in pre-ribosomal RNA (pre-rRNA) processing. Essential for embryonic development in part through the regulation of p53 pathway. Controls the expansion growth of digestive organs and liver. Also involved in the sympathetic neuronal development. Mediates, with CAPN3, the proteasome-independent degradation of p53/TP53. The polypeptide is U3 small nucleolar RNA-associated protein 25 homolog (Homo sapiens (Human)).